The sequence spans 181 residues: Oligoribonuclease (181 aa).

In terms of domain architecture, Exonuclease spans 8–171 (LIWIDLEMTG…DDIRESIAEL (164 aa)). Residue Tyr-129 is part of the active site.

This sequence belongs to the oligoribonuclease family.

The protein localises to the cytoplasm. 3'-to-5' exoribonuclease specific for small oligoribonucleotides. The polypeptide is Oligoribonuclease (Vibrio vulnificus (strain CMCP6)).